Reading from the N-terminus, the 138-residue chain is Acidic phospholipase A2 6 (138 aa).

The N-terminal stretch at 1–16 is a signal peptide; that stretch reads MRTLWIMAVLLVGVEG. 7 disulfides stabilise this stretch: cysteine 42–cysteine 131, cysteine 44–cysteine 60, cysteine 59–cysteine 111, cysteine 65–cysteine 138, cysteine 66–cysteine 104, cysteine 73–cysteine 97, and cysteine 91–cysteine 102. Tyrosine 43, glycine 45, and glycine 47 together coordinate Ca(2+). The active site involves histidine 63. Residue aspartate 64 coordinates Ca(2+). Aspartate 105 is a catalytic residue.

The protein belongs to the phospholipase A2 family. Group II subfamily. D49 sub-subfamily. As to quaternary structure, homodimer. Ca(2+) is required as a cofactor. In terms of tissue distribution, expressed by the venom gland.

The protein localises to the secreted. The catalysed reaction is a 1,2-diacyl-sn-glycero-3-phosphocholine + H2O = a 1-acyl-sn-glycero-3-phosphocholine + a fatty acid + H(+). Functionally, snake venom phospholipase A2 (PLA2) that has high lipolytic activity. PLA2 catalyzes the calcium-dependent hydrolysis of the 2-acyl groups in 3-sn-phosphoglycerides. This Craspedocephalus gramineus (Bamboo pit viper) protein is Acidic phospholipase A2 6.